A 122-amino-acid chain; its full sequence is Large ribosomal subunit protein uL14 (122 aa).

Belongs to the universal ribosomal protein uL14 family. As to quaternary structure, part of the 50S ribosomal subunit. Forms a cluster with proteins L3 and L19. In the 70S ribosome, L14 and L19 interact and together make contacts with the 16S rRNA in bridges B5 and B8.

In terms of biological role, binds to 23S rRNA. Forms part of two intersubunit bridges in the 70S ribosome. This is Large ribosomal subunit protein uL14 from Nitratiruptor sp. (strain SB155-2).